Here is a 304-residue protein sequence, read N- to C-terminus: dTDP-4-dehydrorhamnose reductase (304 aa).

Residues 16–18 (GML), 42–43 (DI), and 66–68 (AWT) each bind NADH. NADPH contacts are provided by residues 17–18 (ML), 42–43 (DI), and 66–68 (AWT). A dTDP-beta-L-rhamnose-binding site is contributed by 107–108 (TD). Tyr-131 and Lys-135 together coordinate NADH. The NADPH site is built by Tyr-131 and Lys-135. Tyr-131 acts as the Proton donor/acceptor in catalysis. Residue Trp-157 coordinates dTDP-beta-L-rhamnose.

This sequence belongs to the dTDP-4-dehydrorhamnose reductase family. As to quaternary structure, homodimer. It depends on Mg(2+) as a cofactor.

It catalyses the reaction dTDP-beta-L-rhamnose + NADP(+) = dTDP-4-dehydro-beta-L-rhamnose + NADPH + H(+). It participates in carbohydrate biosynthesis; dTDP-L-rhamnose biosynthesis. It functions in the pathway antibiotic biosynthesis; streptomycin biosynthesis. Its function is as follows. Involved in the biosynthesis of the streptose moiety of streptomycin. Catalyzes the reduction of dTDP-6-deoxy-L-lyxo-4-hexulose to yield dTDP-L-rhamnose. RmlD uses NADH and NADPH nearly equally well. The protein is dTDP-4-dehydrorhamnose reductase of Streptomyces griseus.